The following is a 272-amino-acid chain: tRNA pseudouridine synthase A (272 aa).

The Nucleophile role is filled by aspartate 62. Tyrosine 120 contributes to the substrate binding site.

It belongs to the tRNA pseudouridine synthase TruA family. As to quaternary structure, homodimer.

The catalysed reaction is uridine(38/39/40) in tRNA = pseudouridine(38/39/40) in tRNA. Functionally, formation of pseudouridine at positions 38, 39 and 40 in the anticodon stem and loop of transfer RNAs. The protein is tRNA pseudouridine synthase A of Nitrosomonas europaea (strain ATCC 19718 / CIP 103999 / KCTC 2705 / NBRC 14298).